The chain runs to 249 residues: MSGTILITGATSGFGQATAQRFVKEGWKVIGTGRRAERLEALSAELGSAFHGVAFDITDEEATKKALAGLPDGFRDIDILVNNAGLALGTAPAPQVPLKDWQTMVDTNITGLLNVTHHLLPTLIERKGIVINLSSVAAHYPYLGGNVYGGTKAFLRQFSLGLRSDLHGKGVRVTSIEPGMCETEFTLVRTGGNQEASDNLYKGVNPITADDIANTIHWVASQPKHININSLELMPVNQSFAGFQVYRES.

NADP(+) is bound at residue 6 to 30 (LITGATSGFGQATAQRFVKEGWKVI). S135 lines the substrate pocket. The Proton acceptor role is filled by Y148.

It belongs to the short-chain dehydrogenases/reductases (SDR) family. In terms of assembly, homotetramer.

It carries out the reaction L-serine + NADP(+) = aminoacetaldehyde + CO2 + NADPH. In terms of biological role, catalyzes the oxidation of the hydroxyl group of serine to form 2-aminomalonate semialdehyde which is spontaneously converted into 2-aminoacetaldehyde and CO(2). Also acts on D-serine, L-glycerate, D-glycerate and 2-methyl-DL-serine. Does not act on O-methyl-DL-serine and L-threonine. In Rhizobium radiobacter (Agrobacterium tumefaciens), this protein is Serine 3-dehydrogenase (sdh).